Here is a 631-residue protein sequence, read N- to C-terminus: Phosphomethylpyrimidine synthase (631 aa).

Substrate is bound by residues N239, M268, Y297, H333, 353–355, 394–397, and E433; these read SRG and DGLR. Residue H437 participates in Zn(2+) binding. Y460 contributes to the substrate binding site. Residue H501 participates in Zn(2+) binding. [4Fe-4S] cluster-binding residues include C581, C584, and C589.

Belongs to the ThiC family. Homodimer. Requires [4Fe-4S] cluster as cofactor.

The catalysed reaction is 5-amino-1-(5-phospho-beta-D-ribosyl)imidazole + S-adenosyl-L-methionine = 4-amino-2-methyl-5-(phosphooxymethyl)pyrimidine + CO + 5'-deoxyadenosine + formate + L-methionine + 3 H(+). Its pathway is cofactor biosynthesis; thiamine diphosphate biosynthesis. Catalyzes the synthesis of the hydroxymethylpyrimidine phosphate (HMP-P) moiety of thiamine from aminoimidazole ribotide (AIR) in a radical S-adenosyl-L-methionine (SAM)-dependent reaction. The polypeptide is Phosphomethylpyrimidine synthase (Salmonella gallinarum (strain 287/91 / NCTC 13346)).